Reading from the N-terminus, the 552-residue chain is Membrane protein insertase YidC (552 aa).

A helical transmembrane segment spans residues Thr-3–Trp-23. The segment at Pro-29–Ala-65 is disordered. The next 4 helical transmembrane spans lie at Trp-359 to Ala-379, Leu-429 to Val-449, Leu-463 to Gln-483, and Pro-503 to Val-523.

It belongs to the OXA1/ALB3/YidC family. Type 1 subfamily. Interacts with the Sec translocase complex via SecD. Specifically interacts with transmembrane segments of nascent integral membrane proteins during membrane integration.

It localises to the cell inner membrane. In terms of biological role, required for the insertion and/or proper folding and/or complex formation of integral membrane proteins into the membrane. Involved in integration of membrane proteins that insert both dependently and independently of the Sec translocase complex, as well as at least some lipoproteins. Aids folding of multispanning membrane proteins. The sequence is that of Membrane protein insertase YidC from Methylobacillus flagellatus (strain ATCC 51484 / DSM 6875 / VKM B-1610 / KT).